The following is a 467-amino-acid chain: Glutamate--tRNA ligase (467 aa).

A 'HIGH' region motif is present at residues 9 to 19; sequence PSPTGFLHIGG. The 'KMSKS' region signature appears at 250–254; sequence KLSKR. K253 provides a ligand contact to ATP.

Belongs to the class-I aminoacyl-tRNA synthetase family. Glutamate--tRNA ligase type 1 subfamily. In terms of assembly, monomer.

Its subcellular location is the cytoplasm. The enzyme catalyses tRNA(Glu) + L-glutamate + ATP = L-glutamyl-tRNA(Glu) + AMP + diphosphate. Its function is as follows. Catalyzes the attachment of glutamate to tRNA(Glu) in a two-step reaction: glutamate is first activated by ATP to form Glu-AMP and then transferred to the acceptor end of tRNA(Glu). The polypeptide is Glutamate--tRNA ligase (Mesomycoplasma hyopneumoniae (strain 232) (Mycoplasma hyopneumoniae)).